Here is a 400-residue protein sequence, read N- to C-terminus: Tryptophan synthase beta chain (400 aa).

Lys-91 is subject to N6-(pyridoxal phosphate)lysine.

Belongs to the TrpB family. As to quaternary structure, tetramer of two alpha and two beta chains. It depends on pyridoxal 5'-phosphate as a cofactor.

It carries out the reaction (1S,2R)-1-C-(indol-3-yl)glycerol 3-phosphate + L-serine = D-glyceraldehyde 3-phosphate + L-tryptophan + H2O. Its pathway is amino-acid biosynthesis; L-tryptophan biosynthesis; L-tryptophan from chorismate: step 5/5. Functionally, the beta subunit is responsible for the synthesis of L-tryptophan from indole and L-serine. The sequence is that of Tryptophan synthase beta chain from Listeria monocytogenes serovar 1/2a (strain ATCC BAA-679 / EGD-e).